A 373-amino-acid chain; its full sequence is Flagellar P-ring protein 1 (373 aa).

An N-terminal signal peptide occupies residues 1–25 (MKPINTFFSSFLLALTLGLPATSQA).

Belongs to the FlgI family. The basal body constitutes a major portion of the flagellar organelle and consists of four rings (L,P,S, and M) mounted on a central rod.

The protein localises to the periplasm. The protein resides in the bacterial flagellum basal body. Assembles around the rod to form the L-ring and probably protects the motor/basal body from shearing forces during rotation. This is Flagellar P-ring protein 1 from Vibrio parahaemolyticus serotype O3:K6 (strain RIMD 2210633).